The chain runs to 373 residues: MPLQPFKTSNLLTMGVELELQLISLSNFDLTAASPDILELLGRSSFPGSFTPEITESMLEIATDVHEEYEQLLKQLFHIRDTLVAVGDRLNIGICGGGTHPFQMWSDQRIFNKTRFIEVSELYGYLTKQFTIFGQHIHIGCEDGNQALFLLHSLNRYIPHFIALSASSPFVQSKDTLYNSARLNSVFAFPLSGRAPFVLNWDEFSLGYFEKMEHTGIVKSMKDFYWDLRPKPEFGTIEMRVCDSPLTVERAAALACYMQALCSYLLENKEPLPHEDDYLVYNYNRFQACRFGLDGTLVHPKTYEQILLREDILTTLRRLKPYANQLNSTMALEHIYEITHKGSDASFLREKYAEHRTLESVVNESLKQFRSSK.

This sequence belongs to the glutamate--cysteine ligase type 2 family. YbdK subfamily.

It catalyses the reaction L-cysteine + L-glutamate + ATP = gamma-L-glutamyl-L-cysteine + ADP + phosphate + H(+). Functionally, ATP-dependent carboxylate-amine ligase which exhibits weak glutamate--cysteine ligase activity. The sequence is that of Putative glutamate--cysteine ligase 2-1 from Legionella pneumophila (strain Lens).